Here is a 248-residue protein sequence, read N- to C-terminus: Ras-related protein Rab-28 (248 aa).

The segment at 1–30 (MTTMGEDEAPALPKKSPLPEKIDEADVDDD) is disordered. GTP is bound at residue 42 to 50 (GDGASGKTS). Positions 64–72 (YHQTLGLDF) match the Effector region motif. GTP-binding positions include 91–95 (DIGGQ), 152–155 (NKTD), and 182–184 (SAK). Residues 227–248 (QSDASYARRSDQSRSTSVCSIT) form a disordered region. The span at 239-248 (SRSTSVCSIT) shows a compositional bias: polar residues.

Belongs to the small GTPase superfamily. Rab family. In terms of tissue distribution, expressed in amphid and phasmid ciliated sensory neurons.

The protein localises to the cell projection. It localises to the cilium membrane. Its subcellular location is the perikaryon. The protein resides in the cytoplasm. It is found in the cytoskeleton. The protein localises to the cilium axoneme. Its function is as follows. GTPase. Intraflagellar transport (IFT) cargo that undergoes bidirectional IFT along the ciliary axoneme when in active GTP-bound state in amphid and phasmid ciliated sensory neurons. Targeting and function as IFT cargo may depend on the BBSome, an IFT cargo adapter. Does not undergo IFT when in inactive GDP-bound state. May in turn play a role in cilium structure and/or function in ciliated sensory neurons. The protein is Ras-related protein Rab-28 of Caenorhabditis elegans.